We begin with the raw amino-acid sequence, 191 residues long: Small ribosomal subunit protein uS10c (191 aa).

The transit peptide at 1-56 (MAVSTVSSFLLPSFGIPSSSPSSTRLKVSLLPSSSTHGGLSSCVLTKPSVSLTKVF) directs the protein to the chloroplast.

It belongs to the universal ribosomal protein uS10 family. As to quaternary structure, part of the 30S ribosomal subunit.

It localises to the plastid. Its subcellular location is the chloroplast. This Arabidopsis thaliana (Mouse-ear cress) protein is Small ribosomal subunit protein uS10c (RPS10).